A 383-amino-acid polypeptide reads, in one-letter code: Serine protease 23 (383 aa).

The signal sequence occupies residues 1-19 (MAGIPGLLFLLFLLLCAVG). Asparagine 93 is a glycosylation site (N-linked (GlcNAc...) asparagine). Positions 108–127 (SSGGGAQHRDSGSSGKSRRK) are disordered. Residue serine 109 is modified to Phosphoserine; by FAM20C. Cysteines 160 and 176 form a disulfide. The Charge relay system role is filled by histidine 175. The N-linked (GlcNAc...) asparagine glycan is linked to asparagine 207. Residues aspartate 240 and serine 316 each act as charge relay system in the active site.

Belongs to the peptidase S1 family.

Its subcellular location is the secreted. The polypeptide is Serine protease 23 (PRSS23) (Macaca mulatta (Rhesus macaque)).